The chain runs to 392 residues: Phosphoglycerate kinase (392 aa).

Substrate-binding positions include 21-23, arginine 36, 59-62, arginine 114, and arginine 147; these read DLN and HLGR. ATP-binding positions include lysine 198, glutamate 320, and 346–349; that span reads GGDT.

This sequence belongs to the phosphoglycerate kinase family. In terms of assembly, monomer.

It is found in the cytoplasm. It catalyses the reaction (2R)-3-phosphoglycerate + ATP = (2R)-3-phospho-glyceroyl phosphate + ADP. It participates in carbohydrate degradation; glycolysis; pyruvate from D-glyceraldehyde 3-phosphate: step 2/5. The sequence is that of Phosphoglycerate kinase from Nitrosomonas europaea (strain ATCC 19718 / CIP 103999 / KCTC 2705 / NBRC 14298).